The following is a 224-amino-acid chain: Urease accessory protein UreF (224 aa).

The protein belongs to the UreF family. As to quaternary structure, ureD, UreF and UreG form a complex that acts as a GTP-hydrolysis-dependent molecular chaperone, activating the urease apoprotein by helping to assemble the nickel containing metallocenter of UreC. The UreE protein probably delivers the nickel.

The protein resides in the cytoplasm. In terms of biological role, required for maturation of urease via the functional incorporation of the urease nickel metallocenter. The protein is Urease accessory protein UreF of Pseudomonas putida (strain GB-1).